A 143-amino-acid polypeptide reads, in one-letter code: Actin-depolymerizing factor (143 aa).

The region spanning glycine 11 to histidine 143 is the ADF-H domain.

The protein belongs to the actin-binding proteins ADF family.

Actin-depolymerizing protein. Severs actin filaments (F-actin) and binds to actin monomers. The polypeptide is Actin-depolymerizing factor (Vitis vinifera (Grape)).